The following is a 284-amino-acid chain: 2,3,4,5-tetrahydropyridine-2,6-dicarboxylate N-succinyltransferase (284 aa).

Positions 111 and 148 each coordinate substrate.

Belongs to the transferase hexapeptide repeat family. In terms of assembly, homotrimer.

Its subcellular location is the cytoplasm. It catalyses the reaction (S)-2,3,4,5-tetrahydrodipicolinate + succinyl-CoA + H2O = (S)-2-succinylamino-6-oxoheptanedioate + CoA. It functions in the pathway amino-acid biosynthesis; L-lysine biosynthesis via DAP pathway; LL-2,6-diaminopimelate from (S)-tetrahydrodipicolinate (succinylase route): step 1/3. This chain is 2,3,4,5-tetrahydropyridine-2,6-dicarboxylate N-succinyltransferase, found in Mesorhizobium japonicum (strain LMG 29417 / CECT 9101 / MAFF 303099) (Mesorhizobium loti (strain MAFF 303099)).